The primary structure comprises 363 residues: Fructose-bisphosphate aldolase A (363 aa).

R43 is a binding site for beta-D-fructose 1,6-bisphosphate. E188 (proton acceptor) is an active-site residue. K230 (schiff-base intermediate with dihydroxyacetone-P) is an active-site residue. Beta-D-fructose 1,6-bisphosphate contacts are provided by residues 272–274 (SGG), S301, and R304.

Belongs to the class I fructose-bisphosphate aldolase family. As to quaternary structure, tetramer.

The enzyme catalyses beta-D-fructose 1,6-bisphosphate = D-glyceraldehyde 3-phosphate + dihydroxyacetone phosphate. Its pathway is carbohydrate degradation; glycolysis; D-glyceraldehyde 3-phosphate and glycerone phosphate from D-glucose: step 4/4. In terms of biological role, plays a key role in glycolysis and gluconeogenesis. This is Fructose-bisphosphate aldolase A from Salmo salar (Atlantic salmon).